A 482-amino-acid polypeptide reads, in one-letter code: Protein DETOXIFICATION 13 (482 aa).

12 helical membrane passes run 39-59 (LICF…LQII), 77-97 (LASS…SCAL), 124-144 (LALV…LLVF), 159-179 (AACL…TRYF), 188-208 (LLIT…LLVY), 218-238 (ALAL…LMCF), 268-288 (AAMI…SGLL), 297-317 (VLSV…AIAA), 337-357 (IVVY…STSL), 381-401 (MAPL…LSGI), 416-436 (LGAF…WIHL), and 439-459 (VGLW…LTLV).

It belongs to the multi antimicrobial extrusion (MATE) (TC 2.A.66.1) family.

It is found in the membrane. The polypeptide is Protein DETOXIFICATION 13 (Arabidopsis thaliana (Mouse-ear cress)).